The chain runs to 90 residues: UPF0297 protein Cthe_0151 (90 aa).

The protein belongs to the UPF0297 family.

The sequence is that of UPF0297 protein Cthe_0151 from Acetivibrio thermocellus (strain ATCC 27405 / DSM 1237 / JCM 9322 / NBRC 103400 / NCIMB 10682 / NRRL B-4536 / VPI 7372) (Clostridium thermocellum).